The following is an 88-amino-acid chain: ATP synthase F(0) complex subunit f, mitochondrial (88 aa).

At A2 the chain carries N-acetylalanine. S3 is subject to Phosphoserine. K16 is subject to N6-acetyllysine. Residues 62-79 (MVLAAYVVFSYCISYKEL) form a helical membrane-spanning segment.

This sequence belongs to the ATPase F chain family. Component of the ATP synthase complex composed at least of ATP5F1A/subunit alpha, ATP5F1B/subunit beta, ATP5MC1/subunit c (homooctomer), MT-ATP6/subunit a, MT-ATP8/subunit 8, ATP5ME/subunit e, ATP5MF/subunit f, ATP5MG/subunit g, ATP5MK/subunit k, ATP5MJ/subunit j, ATP5F1C/subunit gamma, ATP5F1D/subunit delta, ATP5F1E/subunit epsilon, ATP5PF/subunit F6, ATP5PB/subunit b, ATP5PD/subunit d, ATP5PO/subunit OSCP. ATP synthase complex consists of a soluble F(1) head domain (subunits alpha(3) and beta(3)) - the catalytic core - and a membrane F(0) domain - the membrane proton channel (subunits c, a, 8, e, f, g, k and j). These two domains are linked by a central stalk (subunits gamma, delta, and epsilon) rotating inside the F1 region and a stationary peripheral stalk (subunits F6, b, d, and OSCP).

The protein resides in the mitochondrion. The protein localises to the mitochondrion inner membrane. In terms of biological role, subunit f, of the mitochondrial membrane ATP synthase complex (F(1)F(0) ATP synthase or Complex V) that produces ATP from ADP in the presence of a proton gradient across the membrane which is generated by electron transport complexes of the respiratory chain. ATP synthase complex consist of a soluble F(1) head domain - the catalytic core - and a membrane F(1) domain - the membrane proton channel. These two domains are linked by a central stalk rotating inside the F(1) region and a stationary peripheral stalk. During catalysis, ATP synthesis in the catalytic domain of F(1) is coupled via a rotary mechanism of the central stalk subunits to proton translocation. In vivo, can only synthesize ATP although its ATP hydrolase activity can be activated artificially in vitro. Part of the complex F(0) domain. The protein is ATP synthase F(0) complex subunit f, mitochondrial of Rattus norvegicus (Rat).